We begin with the raw amino-acid sequence, 213 residues long: A-type ATP synthase subunit D (213 aa).

It belongs to the V-ATPase D subunit family. Has multiple subunits with at least A(3), B(3), C, D, E, F, H, I and proteolipid K(x).

Its subcellular location is the cell membrane. In terms of biological role, component of the A-type ATP synthase that produces ATP from ADP in the presence of a proton gradient across the membrane. The protein is A-type ATP synthase subunit D of Saccharolobus islandicus (strain Y.N.15.51 / Yellowstone #2) (Sulfolobus islandicus).